Reading from the N-terminus, the 137-residue chain is 15 kDa protein A (137 aa).

The signal sequence occupies residues 1-20 (MAGVWKVLVVLVGLAVVACA). Intrachain disulfides connect C77-C88 and C99-C116.

The protein belongs to the cathelicidin family. In terms of tissue distribution, large granules of neutrophils.

It localises to the secreted. In terms of biological role, binds to bacterial lipopolysaccharides (LPS), potentiates strongly the early antibacterial effects of BPI. Inhibits the late lethal action of BPI. This chain is 15 kDa protein A, found in Oryctolagus cuniculus (Rabbit).